A 328-amino-acid polypeptide reads, in one-letter code: L-serine dehydratase/L-threonine deaminase (328 aa).

The residue at position 41 (Lys41) is an N6-(pyridoxal phosphate)lysine. Pro128 contributes to the pyridoxal 5'-phosphate binding site.

Belongs to the serine/threonine dehydratase family. Homodimer. Requires pyridoxal 5'-phosphate as cofactor. Predominantly expressed in the perivenous regions of the liver.

It localises to the cytoplasm. It catalyses the reaction L-serine = pyruvate + NH4(+). The enzyme catalyses L-threonine = 2-oxobutanoate + NH4(+). It participates in carbohydrate biosynthesis; gluconeogenesis. Catalyzes the pyridoxal-phosphate-dependent dehydrative deamination of L-threonine and L-serine to ammonia and alpha-ketobutyrate and pyruvate, respectively. In Homo sapiens (Human), this protein is L-serine dehydratase/L-threonine deaminase (SDS).